Reading from the N-terminus, the 440-residue chain is Zinc finger MYND domain-containing protein 10 (440 aa).

An interaction with DNAAF11 region spans residues 366–440 (QDLRLQARRW…VLAAQGDRAK (75 aa)). Zn(2+) contacts are provided by Cys-394, Cys-397, Cys-405, Cys-408, Cys-414, Cys-418, His-426, and Cys-430. The MYND-type zinc finger occupies 394–430 (CAYCSAEASKRCSRCQNEWYCCRECQVKHWEKHGKTC).

This sequence belongs to the ZMYND10 family. As to quaternary structure, interacts (via C-terminus) with DNAAF11 (via CS domain); this interaction stabilizes DNAAF11 at the protein level. Interacts (via C-terminus) with DNAL1; this interaction stabilizes DNAL1 at the protein level. Interacts with DNAAF4, HSPA8, IQUB, RUVBL2 and DYNTL5.

Its subcellular location is the cytoplasm. The protein localises to the cytoskeleton. The protein resides in the microtubule organizing center. It localises to the centrosome. It is found in the centriolar satellite. Its subcellular location is the apical cell membrane. The protein localises to the dynein axonemal particle. Functionally, plays a role in axonemal structure organization and motility. Involved in axonemal pre-assembly of inner and outer dynein arms (IDA and ODA, respectively) for proper axoneme building for cilia motility. May act by indirectly regulating transcription of dynein proteins. In Homo sapiens (Human), this protein is Zinc finger MYND domain-containing protein 10.